The chain runs to 75 residues: UPF0352 protein VV1_3121 (75 aa).

The protein belongs to the UPF0352 family.

This Vibrio vulnificus (strain CMCP6) protein is UPF0352 protein VV1_3121.